Here is a 118-residue protein sequence, read N- to C-terminus: Beta-2-microglobulin (118 aa).

Residues 1 to 20 (MAVSAALVLLGLLSLSGLDA) form the signal peptide. The Ig-like C1-type domain occupies 25–112 (PEVQVYSRHP…HVTLTQPKIV (88 aa)). Cys-45 and Cys-99 form a disulfide bridge.

Belongs to the beta-2-microglobulin family. As to quaternary structure, heterodimer of an alpha chain and a beta chain. Beta-2-microglobulin is the beta-chain of major histocompatibility complex class I molecules.

It is found in the secreted. Its function is as follows. Component of the class I major histocompatibility complex (MHC). Involved in the presentation of peptide antigens to the immune system. The polypeptide is Beta-2-microglobulin (B2M) (Ovis aries (Sheep)).